The chain runs to 189 residues: MEVILLERIGRLGQMGETVKVKDGYARNFLLPQGKALRANEANKKKFEGQRAQLEAQNLERKNEAQAVAEKLNGESFIVVRSAGETGQLYGSVSTRDIADIISANGFTLHRNQVELNHPIKAIGLHEVSISLHPEVQVQVTVNIARSTEEAERQAKGEDLTSIEAIYGIEEQPLSEEVFDEEDEAEDQA.

This sequence belongs to the bacterial ribosomal protein bL9 family.

In terms of biological role, binds to the 23S rRNA. This chain is Large ribosomal subunit protein bL9, found in Brucella anthropi (strain ATCC 49188 / DSM 6882 / CCUG 24695 / JCM 21032 / LMG 3331 / NBRC 15819 / NCTC 12168 / Alc 37) (Ochrobactrum anthropi).